The following is a 445-amino-acid chain: Potassium/proton antiporter CemA (445 aa).

A run of 4 helical transmembrane segments spans residues 44 to 64, 330 to 350, 368 to 388, and 405 to 425; these read MQVSVVTFLTLVLVPLGVNIC, ALTCITITFLFFGLKVQILIL, LIIIIVTDLLVGYHSPQGWKL, and FILCFIGTFPVILDTIFKYWI.

It belongs to the CemA family.

Its subcellular location is the plastid. It is found in the chloroplast inner membrane. It carries out the reaction K(+)(in) + H(+)(out) = K(+)(out) + H(+)(in). Contributes to K(+)/H(+) antiport activity by supporting proton efflux to control proton extrusion and homeostasis in chloroplasts in a light-dependent manner to modulate photosynthesis. Prevents excessive induction of non-photochemical quenching (NPQ) under continuous-light conditions. Indirectly promotes efficient inorganic carbon uptake into chloroplasts. In Pleurastrum terricola (Filamentous green alga), this protein is Potassium/proton antiporter CemA.